We begin with the raw amino-acid sequence, 431 residues long: Female gametocyte surface protein P47 (431 aa).

The first 20 residues, 1–20, serve as a signal peptide directing secretion; sequence MKGFTGASIIVFYLIKGYLS. The 153-residue stretch at 26-178 folds into the 6-Cys 1 domain; that stretch reads NGYVCDFKFN…GLVKIILNNQ (153 aa). 3 disulfide bridges follow: Cys-30-Cys-55, Cys-70-Cys-145, and Cys-88-Cys-143. Asn-45 is a glycosylation site (N-linked (GlcNAc...) asparagine). Asn-239 carries N-linked (GlcNAc...) asparagine glycosylation. Positions 278–413 constitute a 6-Cys 2 domain; it reads NIDGCDFTVP…MELKISSSKN (136 aa). 3 disulfide bridges follow: Cys-282-Cys-309, Cys-326-Cys-395, and Cys-335-Cys-393. Ser-409 carries the GPI-anchor amidated serine lipid modification. A propeptide spans 410–431 (removed in mature form); that stretch reads SSKNIFISFILLSIIVSIFYLF.

It localises to the cell surface. The protein resides in the cell membrane. Functionally, required for female fertility. This is Female gametocyte surface protein P47 (PB47) from Plasmodium berghei (strain Anka).